The primary structure comprises 155 residues: Large ribosomal subunit protein uL22c (155 aa).

Belongs to the universal ribosomal protein uL22 family. In terms of assembly, part of the 50S ribosomal subunit.

The protein localises to the plastid. The protein resides in the chloroplast. Functionally, this protein binds specifically to 23S rRNA. In terms of biological role, the globular domain of the protein is located near the polypeptide exit tunnel on the outside of the subunit, while an extended beta-hairpin is found that lines the wall of the exit tunnel in the center of the 70S ribosome. The sequence is that of Large ribosomal subunit protein uL22c (rpl22) from Solanum bulbocastanum (Wild potato).